Reading from the N-terminus, the 438-residue chain is tRNA(Ile)-lysidine synthase (438 aa).

27 to 32 serves as a coordination point for ATP; the sequence is SGGVDS.

Belongs to the tRNA(Ile)-lysidine synthase family.

It localises to the cytoplasm. The enzyme catalyses cytidine(34) in tRNA(Ile2) + L-lysine + ATP = lysidine(34) in tRNA(Ile2) + AMP + diphosphate + H(+). In terms of biological role, ligates lysine onto the cytidine present at position 34 of the AUA codon-specific tRNA(Ile) that contains the anticodon CAU, in an ATP-dependent manner. Cytidine is converted to lysidine, thus changing the amino acid specificity of the tRNA from methionine to isoleucine. The polypeptide is tRNA(Ile)-lysidine synthase (Vibrio parahaemolyticus serotype O3:K6 (strain RIMD 2210633)).